A 164-amino-acid chain; its full sequence is Class I hydrophobin rodA (164 aa).

The first 18 residues, 1–18 (MQFSISALVLGLAATVYA), serve as a signal peptide directing secretion. Asn-50 carries an N-linked (GlcNAc...) asparagine glycan. Cystine bridges form between Cys-60–Cys-138, Cys-68–Cys-132, Cys-69–Cys-109, and Cys-139–Cys-157.

Belongs to the fungal hydrophobin family. As to quaternary structure, self-assembles to form functional amyloid fibrils called rodlets. Self-assembly into fibrillar rodlets occurs spontaneously at hydrophobic:hydrophilic interfaces and the rodlets further associate laterally to form amphipathic monolayers.

It is found in the secreted. The protein localises to the cell wall. Aerial growth, conidiation, and dispersal of filamentous fungi in the environment rely upon a capability of their secreting small amphipathic proteins called hydrophobins (HPBs) with low sequence identity. Class I can self-assemble into an outermost layer of rodlet bundles on aerial cell surfaces, conferring cellular hydrophobicity that supports fungal growth, development and dispersal; whereas Class II form highly ordered films at water-air interfaces through intermolecular interactions but contribute nothing to the rodlet structure. RodA is a class I hydrophobin involved in the cell surface hydrophobicity. The surface rodlet layer of the conidial cell wall makes airborne conidia of filamentous fungi inert to both innate and adaptive immunity. The polypeptide is Class I hydrophobin rodA (Penicillium camemberti (strain FM 013)).